Here is a 566-residue protein sequence, read N- to C-terminus: MMSAMKTEFLCVLLLCGAVFTSPSQETYRRLRRGARSYKVTCRDGKTQMTYRQHDSWLRPLLRGNQVEHCWCDGGRAQCHSVPVRSCSEPWCFNGGTCRQALYSSDFVCQCPEGFMGKLCEIDATATCYKDQGVAYRGTWSTAESGAECANWNSSGLAMKPYSGRRPNAIRLGLGNHNYCRNPDQDSKPWCYVFKAGKYISEFCSTPACAKVAEEDGDCYTGNGLAYRGTRSHTKSGASCLPWNSVFLTSKIYTAWKSNAPALGLGKHNHCRNPDGDAQPWCHVWKDRQLTWEYCDVPQCVTCGLRQYKRPQFRIKGGLFADITSHPWQAAIFVKNRRSPGERFLCGGILISSCWVLSAAHCFQERYPPHHLKVFLGRTYRLVPGEEEQTFEVEKYIIHKEFDDDTYDNDIALLHLKSDSLTCARESASVRTICLPDASLQLPDWTECELSGYGKHESSSPFFSERLKEAHVRLYPSSRCTSQHLFNRTVTNNMLCAGDTRSGGDHTNLHDACQGDSGGPLVCMKDNHMTLVGIISWGLGCGRKDVPGVYTKVTNYLDWIRDNTRP.

Residues 1 to 21 (MMSAMKTEFLCVLLLCGAVFT) form the signal peptide. Residues 22–33 (SPSQETYRRLRR) constitute a propeptide that is removed on maturation. The propeptide at 34–36 (GAR) is removed by plasmin. The region spanning 40-82 (VTCRDGKTQMTYRQHDSWLRPLLRGNQVEHCWCDGGRAQCHSV) is the Fibronectin type-I domain. 17 disulfides stabilise this stretch: Cys-42-Cys-72, Cys-70-Cys-79, Cys-87-Cys-98, Cys-92-Cys-109, Cys-111-Cys-120, Cys-128-Cys-209, Cys-149-Cys-191, Cys-180-Cys-204, Cys-219-Cys-300, Cys-240-Cys-282, Cys-271-Cys-295, Cys-303-Cys-434, Cys-346-Cys-362, Cys-354-Cys-423, Cys-448-Cys-523, Cys-480-Cys-496, and Cys-513-Cys-541. The tract at residues 43–53 (RDGKTQMTYRQ) is important for binding to annexin A2. The EGF-like domain occupies 83–121 (PVRSCSEPWCFNGGTCRQALYSSDFVCQCPEGFMGKLCE). Kringle domains are found at residues 128–209 (CYKD…TPAC) and 219–300 (CYTG…VPQC). N-linked (GlcNAc...) asparagine glycosylation occurs at Asn-153. In terms of domain architecture, Peptidase S1 spans 315 to 565 (IKGGLFADIT…YLDWIRDNTR (251 aa)). Residues His-361 and Asp-410 each act as charge relay system in the active site. An N-linked (GlcNAc...) asparagine glycan is attached at Asn-487. Ser-517 serves as the catalytic Charge relay system.

This sequence belongs to the peptidase S1 family. As to quaternary structure, heterodimer of chain A and chain B held by a disulfide bond. Binds to fibrin with high affinity. This interaction leads to an increase in the catalytic efficiency of the enzyme due to an increase in affinity for plasminogen. Similarly, binding to heparin increases the activation of plasminogen. Binds to annexin A2, cytokeratin-8, fibronectin and laminin. Binds to mannose receptor and the low-density lipoprotein receptor-related protein (LRP1); these proteins are involved in TPA clearance. Binds LRP1B; binding is followed by internalization and degradation. Forms heterodimer with SERPINA5. Interacts with SERPINE1. In complex with SERPINE1, interacts with SORL1. The single chain, almost fully active enzyme, can be further processed into a two-chain fully active form by a cleavage after Arg-314 catalyzed by plasmin, tissue kallikrein or factor Xa.

It is found in the secreted. The protein localises to the extracellular space. It carries out the reaction Specific cleavage of Arg-|-Val bond in plasminogen to form plasmin.. Its activity is regulated as follows. Inhibited by SERPINA5. Inhibited by SERPINE1. In terms of biological role, converts the abundant, but inactive, zymogen plasminogen to plasmin by hydrolyzing a single Arg-Val bond in plasminogen. By controlling plasmin-mediated proteolysis, it plays an important role in tissue remodeling and degradation, in cell migration and many other physiopathological events. During oocyte activation, plays a role in cortical granule reaction in the zona reaction, which contributes to the block to polyspermy. The protein is Tissue-type plasminogen activator (PLAT) of Bos taurus (Bovine).